We begin with the raw amino-acid sequence, 155 residues long: S-ribosylhomocysteine lyase (155 aa).

3 residues coordinate Fe cation: histidine 58, histidine 62, and cysteine 125.

The protein belongs to the LuxS family. Homodimer. It depends on Fe cation as a cofactor.

The enzyme catalyses S-(5-deoxy-D-ribos-5-yl)-L-homocysteine = (S)-4,5-dihydroxypentane-2,3-dione + L-homocysteine. Involved in the synthesis of autoinducer 2 (AI-2) which is secreted by bacteria and is used to communicate both the cell density and the metabolic potential of the environment. The regulation of gene expression in response to changes in cell density is called quorum sensing. Catalyzes the transformation of S-ribosylhomocysteine (RHC) to homocysteine (HC) and 4,5-dihydroxy-2,3-pentadione (DPD). The chain is S-ribosylhomocysteine lyase from Chromohalobacter salexigens (strain ATCC BAA-138 / DSM 3043 / CIP 106854 / NCIMB 13768 / 1H11).